The following is a 1447-amino-acid chain: MWPSQLLIFMMLLAPIIHAFSRAPIPMAVVRRELSCESYPIELRCPGTDVIMIESANYGRTDDKICDSDPAQMENIRCYLPDAYKIMSQRCNNRTQCAVVAGPDVFPDPCPGTYKYLEVQYECVPYKVEQKVFLCPGLLKGVYQSEHLFESDHQSGAWCKDPLQASDKIYYMPWTPYRTDTLTEYSSKDDFIAGRPTTTYKLPHRVDGTGFVVYDGALFFNKERTRNIVKFDLRTRIKSGEAIIANANYHDTSPYRWGGKSDIDLAVDENGLWVIYATEQNNGKIVISQLNPYTLRIEGTWDTAYDKRSASNAFMICGILYVVKSVYEDDDNEATGNKIDYIYNTDQSKDSLVDVPFPNSYQYIAAVDYNPRDNLLYVWNNYHVVKYSLDFGPLDSRSGQAHHGQVSYISPPIHLDSELERPSVKDISTTGPLGMGSTTTSTTLRTTTLSPGRSTTPSVSGRRNRSTSTPSPAVEVLDDMTTHLPSASSQIPALEESCEAVEAREIMWFKTRQGQIAKQPCPAGTIGVSTYLCLAPDGIWDPQGPDLSNCSSPWVNHITQKLKSGETAANIARELAEQTRNHLNAGDITYSVRAMDQLVGLLDVQLRNLTPGGKDSAARSLNKAMVETVNNLLQPQALNAWRDLTTSDQLRAATMLLHTVEESAFVLADNLLKTDIVRENTDNIKLEVARLSTEGNLEDLKFPENMGHGSTIQLSANTLKQNGRNGEIRVAFVLYNNLGPYLSTENASMKLGTEALSTNHSVIVNSPVITAAINKEFSNKVYLADPVVFTVKHIKQSEENFNPNCSFWSYSKRTMTGYWSTQGCRLLTTNKTHTTCSCNHLTNFAVLMAHVEVKHSDAVHDLLLDVITWVGILLSLVCLLICIFTFCFFRGLQSDRNTIHKNLCISLFVAELLFLIGINRTDQPIACAVFAALLHFFFLAAFTWMFLEGVQLYIMLVEVFESEHSRRKYFYLVGYGMPALIVAVSAAVDYRSYGTDKVCWLRLDTYFIWSFIGPATLIIMLNVIFLGIALYKMFHHTAILKPESGCLDNIKSWVIGAIALLCLLGLTWAFGLMYINESTVIMAYLFTIFNSLQGMFIFIFHCVLQKKVRKEYGKCLRTHCCSGKSTESSIGSGKTSGSRTPGRYSTGSQSRIRRMWNDTVRKQSESSFITGDINSSASLNREGLLNNARDTSVMDTLPLNGNHGNSYSIASGEYLSNCVQIIDRGYNHNETALEKKILKELTSNYIPSYLNNHERSSEQNRNLMNKLVNNLGSGREDDAIVLDDATSFNHEESLGLELIHEESDAPLLPPRVYSTENHQPHHYTRRRIPQDHSESFFPLLTNEHTEDLQSPHRDSLYTSMPTLAGVAATESVTTSTQTEPPPAKCGDAEDVYYKSMPNLGSRNHVHQLHTYYQLGRGSSDGFIVPPNKDGTPPEGSSKGPAHLVTSL.

Positions 1–19 are cleaved as a signal peptide; that stretch reads MWPSQLLIFMMLLAPIIHA. The Extracellular segment spans residues 20-862; that stretch reads FSRAPIPMAV…VKHSDAVHDL (843 aa). The 90-residue stretch at 35-124 folds into the SUEL-type lectin domain; that stretch reads SCESYPIELR…KYLEVQYECV (90 aa). 5 disulfide bridges follow: Cys-36/Cys-66, Cys-45/Cys-123, Cys-78/Cys-110, Cys-91/Cys-97, and Cys-135/Cys-317. Asn-93 carries an N-linked (GlcNAc...) asparagine glycan. The 260-residue stretch at 134–393 folds into the Olfactomedin-like domain; sequence LCPGLLKGVY…VVKYSLDFGP (260 aa). Residues 249-279 form an interaction with FLRT3 region; that stretch reads YHDTSPYRWGGKSDIDLAVDENGLWVIYATE. Residues Asp-264, Asn-312, Ala-313, and Val-367 each coordinate Ca(2+). Positions 426 to 473 are disordered; the sequence is DISTTGPLGMGSTTTSTTLRTTTLSPGRSTTPSVSGRRNRSTSTPSPA. Residues 428 to 458 show a composition bias toward low complexity; that stretch reads STTGPLGMGSTTTSTTLRTTTLSPGRSTTPS. N-linked (GlcNAc...) asparagine glycans are attached at residues Asn-464, Asn-549, Asn-746, Asn-759, Asn-804, and Asn-830. The GAIN-B domain occupies 675–854; sequence DIVRENTDNI…AVLMAHVEVK (180 aa). Intrachain disulfides connect Cys-805/Cys-836 and Cys-824/Cys-838. The segment at 805–854 is GPS; the sequence is CSFWSYSKRTMTGYWSTQGCRLLTTNKTHTTCSCNHLTNFAVLMAHVEVK. The tract at residues 842 to 855 is stachel; it reads TNFAVLMAHVEVKH. A helical membrane pass occupies residues 863–888; that stretch reads LLDVITWVGILLSLVCLLICIFTFCF. Topologically, residues 889–896 are cytoplasmic; it reads FRGLQSDR. A helical transmembrane segment spans residues 897-918; the sequence is NTIHKNLCISLFVAELLFLIGI. At 919 to 926 the chain is on the extracellular side; sequence NRTDQPIA. A helical transmembrane segment spans residues 927-950; it reads CAVFAALLHFFFLAAFTWMFLEGV. Cys-927 and Cys-999 are oxidised to a cystine. Over 951-967 the chain is Cytoplasmic; it reads QLYIMLVEVFESEHSRR. A helical transmembrane segment spans residues 968-990; the sequence is KYFYLVGYGMPALIVAVSAAVDY. Residues 991–1005 lie on the Extracellular side of the membrane; that stretch reads RSYGTDKVCWLRLDT. A helical transmembrane segment spans residues 1006 to 1027; it reads YFIWSFIGPATLIIMLNVIFLG. Residues 1028 to 1053 are Cytoplasmic-facing; that stretch reads IALYKMFHHTAILKPESGCLDNIKSW. A helical transmembrane segment spans residues 1054-1073; the sequence is VIGAIALLCLLGLTWAFGLM. Residues 1074 to 1078 lie on the Extracellular side of the membrane; sequence YINES. The N-linked (GlcNAc...) asparagine glycan is linked to Asn-1076. Residues 1079–1104 traverse the membrane as a helical segment; it reads TVIMAYLFTIFNSLQGMFIFIFHCVL. Residues 1105–1447 lie on the Cytoplasmic side of the membrane; that stretch reads QKKVRKEYGK…KGPAHLVTSL (343 aa). The tract at residues 1123–1147 is disordered; sequence GKSTESSIGSGKTSGSRTPGRYSTG. The residue at position 1164 (Ser-1164) is a Phosphoserine. The tract at residues 1423 to 1447 is disordered; sequence IVPPNKDGTPPEGSSKGPAHLVTSL. The short motif at 1442-1447 is the PDZ-binding element; the sequence is HLVTSL.

This sequence belongs to the G-protein coupled receptor 2 family. LN-TM7 subfamily. Heterodimer of 2 chains generated by proteolytic processing; the large extracellular N-terminal fragment and the membrane-bound C-terminal fragment predominantly remain associated and non-covalently linked. Interacts (via olfactomedin-like domain) with FLRT1 (via extracellular domain). Interacts (via olfactomedin-like domain) with FLRT2 (via extracellular domain). Interacts (via olfactomedin-like domain) with FLRT3 (via extracellular domain); the interaction is direct. Interacts (via extracellular domain) with TENM1. Interacts (via extracellular domain) with TENM2. Interacts (via extracellular domain) with TENM3. Identified in a complex with FLRT3 and UNC5B; does not interact with UNC5B by itself. Identified in a complex with FLRT3 and UNC5D; does not interact with UNC5D by itself. As to quaternary structure, interacts (via PDZ-binding motif) with SHANK3. Interacts (via PDZ-binding motif) with DLG4. Post-translationally, autoproteolytically processed at the GPS region of the GAIN-B domain; this cleavage modulates receptor activity.

It localises to the cell membrane. The protein resides in the postsynaptic cell membrane. Its subcellular location is the cell projection. It is found in the axon. The protein localises to the cell junction. Forms a heterodimer of 2 chains generated by proteolytic processing that remain associated through non-covalent interactions mediated by the GAIN-B domain. In the inactivated receptor, the Stachel sequence (also named stalk) is embedded in the GAIN-B domain, where it adopts a beta-strand conformation. On activation, the Stachel moves into the 7 transmembrane region and adopts a twisted hook-shaped configuration that forms contacts within the receptor, leading to coupling of a G-alpha protein, which activates signaling. The cleaved GAIN-B and N-terminal domains can then dissociate from the rest of the receptor. Orphan adhesion G-protein coupled receptor (aGPCR), which mediates synapse specificity. Ligand binding causes a conformation change that triggers signaling via guanine nucleotide-binding proteins (G proteins) and modulates the activity of downstream effectors. ADGRL3 is coupled with different classes of G alpha proteins, such as G(12)/G(13), G(s), G(i) or G(q), depending on the context. Coupling to G(12)/G(13) G proteins, which mediates the activation Rho small GTPases is the most efficient. Following G-protein coupled receptor activation, associates with cell adhesion molecules that are expressed at the surface of adjacent cells to direct synapse specificity. Specifically mediates the establishment of Schaffer-collateral synapses formed by CA3-region axons on CA1-region pyramidal neurons in the hippocampus. Localizes to postsynaptic spines in excitatory synapses in the S.oriens and S.radiatum and interacts with presynaptic cell adhesion molecules FLRT3 and TENM2, promoting synapse formation. Plays a role in the development of glutamatergic synapses in the cortex. Important in determining the connectivity rates between the principal neurons in the cortex. Functionally, orphan adhesion G-protein coupled receptor (aGPCR), which mediates synapse specificity. Ligand binding causes a conformation change that triggers signaling via guanine nucleotide-binding proteins (G proteins) and modulates the activity of downstream effectors, such as adenylate cyclase. Isoform 1 is specifically coupled to G(s) G proteins and mediates activation of adenylate cyclase activity. Following G-protein coupled receptor activation, undergoes liquid-liquid phase transition, associates with (1) cell adhesion molecules that are expressed at the surface of adjacent cells, as well as (2) PDZ-containing proteins, such as SHANK3 and DLG4, in the cytoplasm to direct synapse formation. The chain is Adhesion G protein-coupled receptor L3 from Homo sapiens (Human).